The chain runs to 400 residues: MIGVIGVKRNVDIAIREKLALYPKKHKKYVGELLNSFKEVVILNTCNRTEIYFNCTEEISEDEIFDKIFNVFNWNDDLKKYMFLSKEKRAVTHLMEVICGFHSRILGEDQILGQIKGAYKTAISDNSISSELQKMFEIAIACGKKFKTECKMFEVPVSSVSISINSALLKGCRKFMVLGYGEIGKLAIKHLLSHKVECIYLIVRDKSKASDLEGEIVEVLDFNEKNQVINEIDCIVSCTAAPHTVVRNEDIKTEGETIHIYDLAVPRDVDKELSEKERVILKDIDEISKIDDKNKKIRKERMEEYKHIVEESIDEFLNWLKIREVSSKIRNIKIRENEICSERIKTFSNKGNGENAKLAERMIKSTADAYVNRAIELLKSEALKGSDSYCAEIIEKIFLT.

Substrate contacts are provided by residues 45 to 48 (TCNR), Ser-103, 108 to 110 (EDQ), and Gln-114. Cys-46 (nucleophile) is an active-site residue. Residue 179 to 184 (GYGEIG) participates in NADP(+) binding.

It belongs to the glutamyl-tRNA reductase family. In terms of assembly, homodimer.

It catalyses the reaction (S)-4-amino-5-oxopentanoate + tRNA(Glu) + NADP(+) = L-glutamyl-tRNA(Glu) + NADPH + H(+). Its pathway is porphyrin-containing compound metabolism; protoporphyrin-IX biosynthesis; 5-aminolevulinate from L-glutamyl-tRNA(Glu): step 1/2. In terms of biological role, catalyzes the NADPH-dependent reduction of glutamyl-tRNA(Glu) to glutamate 1-semialdehyde (GSA). This chain is Glutamyl-tRNA reductase, found in Clostridium perfringens (strain ATCC 13124 / DSM 756 / JCM 1290 / NCIMB 6125 / NCTC 8237 / Type A).